The primary structure comprises 358 residues: Leukotriene B4 receptor 2 (358 aa).

Residues 1–24 (MSVCYRPPGNETLLSWKGSRATGT) are Extracellular-facing. N-linked (GlcNAc...) asparagine glycosylation is present at Asn-10. A helical membrane pass occupies residues 25 to 45 (AFLLLAALLGLPGNGFVVWSL). The Cytoplasmic portion of the chain corresponds to 46 to 60 (AGWRPTAGRPLAATL). The chain crosses the membrane as a helical span at residues 61-81 (VLHLALADGAVLLLTPLFVAF). Residues 82–96 (LSRQAWPLGQVGCKA) lie on the Extracellular side of the membrane. A helical membrane pass occupies residues 97 to 117 (VYYVCALSMYASVLLTGLLSL). Residues 118–140 (QRCLAVTRPFLAPRLRSPALARR) are Cytoplasmic-facing. Residues 141–161 (LLLGVWLAALVLAVPAAVYRH) traverse the membrane as a helical segment. The Extracellular segment spans residues 162 to 185 (LWGDRVCQLCHPSAVHAAAHLSLE). A helical transmembrane segment spans residues 186–206 (TLTAFVLPFGTVLGCYGVTLA). Over 207–225 (RLRGARWGSGRQGTRVGRL) the chain is Cytoplasmic. Residues 226 to 246 (VSAIVLAFGLLWAPYHAVNLL) traverse the membrane as a helical segment. The Extracellular portion of the chain corresponds to 247–275 (QAVAALAPPEGPLARLGGAGQAARAGTTA). A helical membrane pass occupies residues 276–296 (LAFFSSSVNPVLYVFTAGDLL). At 297–358 (PRAGPRFLTR…GRMEKDSQEW (62 aa)) the chain is on the cytoplasmic side. The segment at 315-358 (RVGSRSREGTMELRTTPRLKVVGQGRGYGDPGGGGRMEKDSQEW) is disordered. Gly residues predominate over residues 338–349 (QGRGYGDPGGGG).

This sequence belongs to the G-protein coupled receptor 1 family.

It is found in the cell membrane. Functionally, low-affinity receptor for leukotrienes including leukotriene B4. Mediates chemotaxis of granulocytes and macrophages. The response is mediated via G-proteins that activate a phosphatidylinositol-calcium second messenger system. The sequence is that of Leukotriene B4 receptor 2 (Ltb4r2) from Rattus norvegicus (Rat).